The following is an 857-amino-acid chain: Leucine--tRNA ligase (857 aa).

Positions 42–52 (PYPSGNLHMGH) match the 'HIGH' region motif. A 'KMSKS' region motif is present at residues 615 to 619 (KMSKS). Residue Lys618 participates in ATP binding.

This sequence belongs to the class-I aminoacyl-tRNA synthetase family.

Its subcellular location is the cytoplasm. It catalyses the reaction tRNA(Leu) + L-leucine + ATP = L-leucyl-tRNA(Leu) + AMP + diphosphate. This chain is Leucine--tRNA ligase, found in Thermosynechococcus vestitus (strain NIES-2133 / IAM M-273 / BP-1).